We begin with the raw amino-acid sequence, 352 residues long: Protein RecA (352 aa).

67 to 74 (GPESSGKT) serves as a coordination point for ATP.

Belongs to the RecA family.

Its subcellular location is the cytoplasm. Its function is as follows. Can catalyze the hydrolysis of ATP in the presence of single-stranded DNA, the ATP-dependent uptake of single-stranded DNA by duplex DNA, and the ATP-dependent hybridization of homologous single-stranded DNAs. It interacts with LexA causing its activation and leading to its autocatalytic cleavage. The chain is Protein RecA from Chlamydia trachomatis serovar D (strain ATCC VR-885 / DSM 19411 / UW-3/Cx).